A 717-amino-acid chain; its full sequence is Amino-acid acetyltransferase, mitochondrial (717 aa).

A mitochondrion-targeting transit peptide spans 1-23; that stretch reads MFIWTKAPARGLGKASKILPKRD. The tract at residues 35–70 is disordered; that stretch reads KQFHTATTSVRRSSSSAKERQRAERQQLTRLLKESP. The segment covering 39 to 50 has biased composition (low complexity); the sequence is TATTSVRRSSSS. Positions 51–70 are enriched in basic and acidic residues; the sequence is AKERQRAERQQLTRLLKESP. Positions 518-691 constitute an N-acetyltransferase domain; sequence NPSIELADDP…GDVDDAKKRD (174 aa).

Belongs to the acetyltransferase family.

The protein localises to the mitochondrion. The catalysed reaction is L-glutamate + acetyl-CoA = N-acetyl-L-glutamate + CoA + H(+). It functions in the pathway amino-acid biosynthesis; L-arginine biosynthesis; N(2)-acetyl-L-ornithine from L-glutamate: step 1/4. In terms of biological role, N-acetylglutamate synthase involved in arginine biosynthesis. The protein is Amino-acid acetyltransferase, mitochondrial (arg2) of Pyrenophora tritici-repentis (strain Pt-1C-BFP) (Wheat tan spot fungus).